Here is a 124-residue protein sequence, read N- to C-terminus: Protein MGF 110-4L (124 aa).

The signal sequence occupies residues 1 to 28 (MLVIFLGILGLLANQVLGLPTQAGGHLR). N-linked (GlcNAc...) asparagine; by host glycosylation occurs at asparagine 64. Positions 121 to 124 (KEDL) match the Prevents secretion from ER motif.

The protein belongs to the asfivirus MGF 110 family.

It localises to the virion. The protein localises to the host endoplasmic reticulum-Golgi intermediate compartment. Functionally, causes the redistribution of lumenal ER protein to an enlarged ERGIC compartment. This African swine fever virus (strain Badajoz 1971 Vero-adapted) (Ba71V) protein is Protein MGF 110-4L.